Reading from the N-terminus, the 206-residue chain is tRNA (guanine-N(7)-)-methyltransferase (206 aa).

Positions 37, 62, 89, and 112 each coordinate S-adenosyl-L-methionine. Residue aspartate 112 is part of the active site. Positions 116 and 148 each coordinate substrate.

The protein belongs to the class I-like SAM-binding methyltransferase superfamily. TrmB family.

The enzyme catalyses guanosine(46) in tRNA + S-adenosyl-L-methionine = N(7)-methylguanosine(46) in tRNA + S-adenosyl-L-homocysteine. It participates in tRNA modification; N(7)-methylguanine-tRNA biosynthesis. Functionally, catalyzes the formation of N(7)-methylguanine at position 46 (m7G46) in tRNA. In Myxococcus xanthus (strain DK1622), this protein is tRNA (guanine-N(7)-)-methyltransferase.